The sequence spans 175 residues: Ribosome maturation factor RimM (175 aa).

The 74-residue stretch at 99–172 (EGEFHLLDLV…WLRLTPPPGL (74 aa)) folds into the PRC barrel domain.

It belongs to the RimM family. In terms of assembly, binds ribosomal protein uS19.

Its subcellular location is the cytoplasm. In terms of biological role, an accessory protein needed during the final step in the assembly of 30S ribosomal subunit, possibly for assembly of the head region. Essential for efficient processing of 16S rRNA. May be needed both before and after RbfA during the maturation of 16S rRNA. It has affinity for free ribosomal 30S subunits but not for 70S ribosomes. This Synechococcus sp. (strain WH7803) protein is Ribosome maturation factor RimM.